Here is a 2346-residue protein sequence, read N- to C-terminus: Acetyl-CoA carboxylase 1 (2346 aa).

At methionine 1 the chain carries N-acetylmethionine. Residues serine 5, serine 23, serine 25, serine 29, serine 34, serine 48, serine 50, and serine 53 each carry the phosphoserine modification. Residue threonine 58 is modified to Phosphothreonine. 2 positions are modified to phosphoserine: serine 78 and serine 80. In terms of domain architecture, Biotin carboxylation spans 117–618; it reads VIEKVLIANN…DTGWLDRLIA (502 aa). The 192-residue stretch at 275 to 466 folds into the ATP-grasp domain; it reads SKRILNVPQE…LPAAQLQIAM (192 aa). Position 315–320 (315–320) interacts with ATP; sequence GGGGKG. Glutamate 424, glutamate 437, and asparagine 439 together coordinate Mg(2+). Residues glutamate 424, glutamate 437, and asparagine 439 each coordinate Mn(2+). Arginine 441 is a catalytic residue. Serine 488 is modified (phosphoserine). The residue at position 610 (threonine 610) is a Phosphothreonine. Residues 745–819 enclose the Biotinyl-binding domain; the sequence is FEKENDPSVM…DPGCVLAKMQ (75 aa). An N6-biotinyllysine modification is found at lysine 786. Residues serine 835, serine 1201, serine 1216, and serine 1218 each carry the phosphoserine modification. Residue threonine 1227 is modified to Phosphothreonine. 3 positions are modified to phosphoserine: serine 1259, serine 1263, and serine 1273. Lysine 1334 is subject to N6-acetyllysine. The region spanning 1576 to 1914 is the CoA carboxyltransferase N-terminal domain; sequence PYVTKDLLQS…SVHSSVPLLN (339 aa). The tract at residues 1576–2234 is carboxyltransferase; sequence PYVTKDLLQS…EDLVKKKIHN (659 aa). Residues arginine 1823, lysine 2127, and arginine 2129 each contribute to the CoA site. A CoA carboxyltransferase C-terminal domain is found at 1918-2234; sequence PIDRIIEFVP…EDLVKKKIHN (317 aa). Threonine 2153 carries the post-translational modification Phosphothreonine.

As to quaternary structure, monomer, homodimer, and homotetramer. Can form filamentous polymers. Interacts in its inactive phosphorylated form with the BRCT domains of BRCA1 which prevents ACACA dephosphorylation and inhibits lipid synthesis. Interacts with MID1IP1; interaction with MID1IP1 promotes oligomerization and increases its activity. Mg(2+) is required as a cofactor. Requires Mn(2+) as cofactor. The cofactor is biotin. Post-translationally, phosphorylation on Ser-1263 is required for interaction with BRCA1. In terms of processing, phosphorylation at Ser-80 by AMPK inactivates enzyme activity. The biotin cofactor is covalently attached to the central biotinyl-binding domain and is required for the catalytic activity. Expressed in brain, placenta, skeletal muscle, renal, pancreatic and adipose tissues; expressed at low level in pulmonary tissue; not detected in the liver.

The protein resides in the cytoplasm. It is found in the cytosol. It carries out the reaction hydrogencarbonate + acetyl-CoA + ATP = malonyl-CoA + ADP + phosphate + H(+). The protein operates within lipid metabolism; malonyl-CoA biosynthesis; malonyl-CoA from acetyl-CoA: step 1/1. Inhibited by phosphorylation. Citrate promotes oligomerization of the protein into filaments that correspond to the most active form of the carboxylase. Inhibited by palmitoyl-CoA. Cytosolic enzyme that catalyzes the carboxylation of acetyl-CoA to malonyl-CoA, the first and rate-limiting step of de novo fatty acid biosynthesis. This is a 2 steps reaction starting with the ATP-dependent carboxylation of the biotin carried by the biotin carboxyl carrier (BCC) domain followed by the transfer of the carboxyl group from carboxylated biotin to acetyl-CoA. This Homo sapiens (Human) protein is Acetyl-CoA carboxylase 1.